Here is a 442-residue protein sequence, read N- to C-terminus: D-serine dehydratase (442 aa).

K118 is modified (N6-(pyridoxal phosphate)lysine).

This sequence belongs to the serine/threonine dehydratase family. DsdA subfamily. In terms of assembly, monomer. The cofactor is pyridoxal 5'-phosphate.

It carries out the reaction D-serine = pyruvate + NH4(+). The sequence is that of D-serine dehydratase from Escherichia coli O6:H1 (strain CFT073 / ATCC 700928 / UPEC).